Here is a 130-residue protein sequence, read N- to C-terminus: MKNEISIKFNFPEGILGFEEIKEFIIKDSEHKPFSIMQSINGEINFLVTSPFNFLEKYLPNIEEEDWLDIQTENEDEKVILCIINMHVKNYKEITANLKAPIILNKKKLIGKQAISTNEEHYLRYRVFKE.

Belongs to the FliW family. In terms of assembly, interacts with translational regulator CsrA and flagellin(s).

Its subcellular location is the cytoplasm. Functionally, acts as an anti-CsrA protein, binds CsrA and prevents it from repressing translation of its target genes, one of which is flagellin. Binds to flagellin and participates in the assembly of the flagellum. The polypeptide is Flagellar assembly factor FliW (Borrelia turicatae (strain 91E135)).